A 114-amino-acid polypeptide reads, in one-letter code: Procyclic form-specific polypeptide A-alpha (114 aa).

The N-terminal stretch at 1 to 27 (MAPRSLYLLAILLFSANLFAGVGFAAA) is a signal peptide. Positions 33–95 (SNVIVKGGKG…EPEPEPGAAT (63 aa)) are disordered. The segment covering 47–89 (DGPEEPEETGPEETGPEETGPEETGPEETGPEETGPEETEPEP) has biased composition (acidic residues). 7 consecutive repeat copies span residues 48-52 (GPEEP), 56-60 (GPEET), 61-65 (GPEET), 66-70 (GPEET), 71-75 (GPEET), 76-80 (GPEET), and 81-85 (GPEET). The interval 48-85 (GPEEPEETGPEETGPEETGPEETGPEETGPEETGPEET) is 7 X 5 AA tandem repeats of G-P-E-E-[PT]. G92 carries GPI-anchor amidated glycine lipidation. Residues 93–114 (AATLKSVALPFAVAAAALVAAF) constitute a propeptide that is removed on maturation.

It localises to the cell membrane. Functionally, major surface antigen of procyclic forms. This Trypanosoma brucei brucei protein is Procyclic form-specific polypeptide A-alpha (PARPA-ALPHA).